Consider the following 204-residue polypeptide: 8-oxoguanine DNA glycosylase/AP lyase (204 aa).

Residues K129 and D147 contribute to the active site.

The protein belongs to the type-2 OGG1 family.

The catalysed reaction is 2'-deoxyribonucleotide-(2'-deoxyribose 5'-phosphate)-2'-deoxyribonucleotide-DNA = a 3'-end 2'-deoxyribonucleotide-(2,3-dehydro-2,3-deoxyribose 5'-phosphate)-DNA + a 5'-end 5'-phospho-2'-deoxyribonucleoside-DNA + H(+). Functionally, catalyzes the excision of an oxidatively damaged form of guanine (7,8-dihydro-8-oxoguanine = 8-oxoG) from DNA. Also cleaves the DNA backbone at apurinic/apyrimidinic sites (AP sites). Prefers oligomers containing 8-oxoG:C, 8-oxoG:T and 8-oxoG:G base pairs, and is less effective on oligomers containing 8-oxoG:A mispairs. This chain is 8-oxoguanine DNA glycosylase/AP lyase, found in Thermoplasma volcanium (strain ATCC 51530 / DSM 4299 / JCM 9571 / NBRC 15438 / GSS1).